Here is a 365-residue protein sequence, read N- to C-terminus: Sulfate/thiosulfate import ATP-binding protein CysA (365 aa).

One can recognise an ABC transporter domain in the interval 3-237 (IEIARIKKSF…PATRFVLEFM (235 aa)). 35–42 (GPSGSGKT) contacts ATP.

This sequence belongs to the ABC transporter superfamily. Sulfate/tungstate importer (TC 3.A.1.6) family. The complex is composed of two ATP-binding proteins (CysA), two transmembrane proteins (CysT and CysW) and a solute-binding protein (CysP).

The protein localises to the cell inner membrane. It carries out the reaction sulfate(out) + ATP + H2O = sulfate(in) + ADP + phosphate + H(+). It catalyses the reaction thiosulfate(out) + ATP + H2O = thiosulfate(in) + ADP + phosphate + H(+). In terms of biological role, part of the ABC transporter complex CysAWTP involved in sulfate/thiosulfate import. Responsible for energy coupling to the transport system. This is Sulfate/thiosulfate import ATP-binding protein CysA from Salmonella typhimurium (strain LT2 / SGSC1412 / ATCC 700720).